Reading from the N-terminus, the 715-residue chain is Phosphoribosylformylglycinamidine synthase subunit PurL (715 aa).

His33 is a catalytic residue. Residue Tyr36 participates in ATP binding. Glu77 contributes to the Mg(2+) binding site. Residues 78-81 (SHNH) and Arg100 contribute to the substrate site. Residue His79 is the Proton acceptor of the active site. Asp101 contacts Mg(2+). Residue Gln225 participates in substrate binding. Asp253 lines the Mg(2+) pocket. Residue 297–299 (ESQ) coordinates substrate. ATP-binding residues include Asn475 and Gly512. Asn513 serves as a coordination point for Mg(2+). Ser515 is a substrate binding site.

Belongs to the FGAMS family. As to quaternary structure, monomer. Part of the FGAM synthase complex composed of 1 PurL, 1 PurQ and 2 PurS subunits.

The protein localises to the cytoplasm. The enzyme catalyses N(2)-formyl-N(1)-(5-phospho-beta-D-ribosyl)glycinamide + L-glutamine + ATP + H2O = 2-formamido-N(1)-(5-O-phospho-beta-D-ribosyl)acetamidine + L-glutamate + ADP + phosphate + H(+). It functions in the pathway purine metabolism; IMP biosynthesis via de novo pathway; 5-amino-1-(5-phospho-D-ribosyl)imidazole from N(2)-formyl-N(1)-(5-phospho-D-ribosyl)glycinamide: step 1/2. Functionally, part of the phosphoribosylformylglycinamidine synthase complex involved in the purines biosynthetic pathway. Catalyzes the ATP-dependent conversion of formylglycinamide ribonucleotide (FGAR) and glutamine to yield formylglycinamidine ribonucleotide (FGAM) and glutamate. The FGAM synthase complex is composed of three subunits. PurQ produces an ammonia molecule by converting glutamine to glutamate. PurL transfers the ammonia molecule to FGAR to form FGAM in an ATP-dependent manner. PurS interacts with PurQ and PurL and is thought to assist in the transfer of the ammonia molecule from PurQ to PurL. The sequence is that of Phosphoribosylformylglycinamidine synthase subunit PurL from Methanosarcina acetivorans (strain ATCC 35395 / DSM 2834 / JCM 12185 / C2A).